A 312-amino-acid polypeptide reads, in one-letter code: MLGKGVVDYTREGSILSAEQRRFYEKNGYLLIRNCVPQYELNRFRQRFQDICEKKVKAPENMTVMKDISIAKSEFKDGEKAITKIQDFADDPVLFEYCKYPGVVDVVKDLIGNPKSNLMAMHTMLINKPPDNGKLTSRHPMHQDLQYFPFRPADFICCAWTAMEKITRANGCLVVVPGTHKGVLLPHEYPKWEGGVNKAYHGIQDYDTSTPRIHVEMEPGDTVFFHPILIHGSGANRTEGFRKAISCHYANDDLCRYVNVEGTTQETLAEEIIEIAKKRLTRYGLDPNTVTLDFADIWRVRAREVNGRRSNL.

Residues lysine 84, methionine 124, 142-144 (HQD), and tryptophan 160 each bind 2-oxoglutarate. The Fe cation site is built by histidine 142 and aspartate 144. Position 231 (histidine 231) interacts with Fe cation. 2-oxoglutarate contacts are provided by serine 233 and arginine 242.

The protein belongs to the PhyH family. Requires Fe cation as cofactor. L-ascorbate serves as cofactor.

The enzyme catalyses phytanoyl-CoA + 2-oxoglutarate + O2 = 2-hydroxyphytanoyl-CoA + succinate + CO2. Its pathway is lipid metabolism; fatty acid metabolism. Converts phytanoyl-CoA to 2-hydroxyphytanoyl-CoA. This chain is Probable phytanoyl-CoA dioxygenase, found in Caenorhabditis elegans.